The following is a 373-amino-acid chain: 5-amino-6-(5-phospho-D-ribitylamino)uracil phosphatase, chloroplastic (373 aa).

Belongs to the HAD-like hydrolase superfamily. DOG/GPP family. Homodimer. Mg(2+) is required as a cofactor.

It is found in the plastid. Its subcellular location is the chloroplast. It catalyses the reaction 5-amino-6-(5-phospho-D-ribitylamino)uracil + H2O = 5-amino-6-(D-ribitylamino)uracil + phosphate. Functionally, catalyzes the dephosphorylation of 5-amino-6-(5-phospho-D-ribitylamino)uracil, also known as ARPP, but has no activity toward flavin mononucleotide (FMN). The polypeptide is 5-amino-6-(5-phospho-D-ribitylamino)uracil phosphatase, chloroplastic (Arabidopsis thaliana (Mouse-ear cress)).